The following is a 187-amino-acid chain: Elongation factor P (187 aa).

The protein belongs to the elongation factor P family.

Its subcellular location is the cytoplasm. It functions in the pathway protein biosynthesis; polypeptide chain elongation. In terms of biological role, involved in peptide bond synthesis. Stimulates efficient translation and peptide-bond synthesis on native or reconstituted 70S ribosomes in vitro. Probably functions indirectly by altering the affinity of the ribosome for aminoacyl-tRNA, thus increasing their reactivity as acceptors for peptidyl transferase. The chain is Elongation factor P from Kocuria rhizophila (strain ATCC 9341 / DSM 348 / NBRC 103217 / DC2201).